The sequence spans 979 residues: Protein argonaute PNH1 (979 aa).

The segment at methionine 1–proline 95 is disordered. Over residues alanine 54 to glutamate 67 the composition is skewed to low complexity. Residues glycine 77 to glycine 86 are compositionally biased toward basic residues. In terms of domain architecture, PAZ spans proline 333–glutamate 446. The 322-residue stretch at leucine 620–glutamate 941 folds into the Piwi domain.

It belongs to the argonaute family. Ago subfamily.

It localises to the cytoplasm. In terms of biological role, probably involved in the RNA silencing pathway. May bind to short RNAs such as microRNAs (miRNAs) or short interfering RNAs (siRNAs), and represses the translation of mRNAs which are complementary to them. Plays a role in the maintenance of the indeterminate state of the stem cells in the shoot apical meristem (SAM). Regulates leaf formation through vascular development and may be involved in determining the central domain of the leaf founder region. This is Protein argonaute PNH1 (PHN1) from Oryza sativa subsp. japonica (Rice).